A 732-amino-acid chain; its full sequence is Catalase-peroxidase (732 aa).

The segment covering 1 to 10 has biased composition (basic and acidic residues); sequence MDAKTDDKAG. The tract at residues 1–26 is disordered; it reads MDAKTDDKAGKCPVAHGPAPRGNRDW. Positions 95–217 form a cross-link, tryptophyl-tyrosyl-methioninium (Trp-Tyr) (with M-243); sequence WHSAGTYRTT…LGAVQMGLIY (123 aa). H96 acts as the Proton acceptor in catalysis. A cross-link (tryptophyl-tyrosyl-methioninium (Tyr-Met) (with W-95)) is located at residues 217 to 243; that stretch reads YVNPEGPNGNPDPLGSAKDIRETFARM. H258 contributes to the heme b binding site.

Belongs to the peroxidase family. Peroxidase/catalase subfamily. Homodimer or homotetramer. The cofactor is heme b. Formation of the three residue Trp-Tyr-Met cross-link is important for the catalase, but not the peroxidase activity of the enzyme.

It carries out the reaction H2O2 + AH2 = A + 2 H2O. The enzyme catalyses 2 H2O2 = O2 + 2 H2O. Functionally, bifunctional enzyme with both catalase and broad-spectrum peroxidase activity. The protein is Catalase-peroxidase of Rhodopseudomonas palustris (strain BisB18).